The following is a 340-amino-acid chain: tRNA N6-adenosine threonylcarbamoyltransferase (340 aa).

Residues His111 and His115 each coordinate Fe cation. Substrate-binding positions include 134 to 138 (LVSGG), Asp167, Gly180, and Asn272. Asp300 provides a ligand contact to Fe cation.

Belongs to the KAE1 / TsaD family. Requires Fe(2+) as cofactor.

The protein resides in the cytoplasm. The catalysed reaction is L-threonylcarbamoyladenylate + adenosine(37) in tRNA = N(6)-L-threonylcarbamoyladenosine(37) in tRNA + AMP + H(+). Required for the formation of a threonylcarbamoyl group on adenosine at position 37 (t(6)A37) in tRNAs that read codons beginning with adenine. Is involved in the transfer of the threonylcarbamoyl moiety of threonylcarbamoyl-AMP (TC-AMP) to the N6 group of A37, together with TsaE and TsaB. TsaD likely plays a direct catalytic role in this reaction. The polypeptide is tRNA N6-adenosine threonylcarbamoyltransferase (Proteus mirabilis (strain HI4320)).